Consider the following 265-residue polypeptide: 3-methyl-2-oxobutanoate hydroxymethyltransferase (265 aa).

Positions 44 and 83 each coordinate Mg(2+). 3-methyl-2-oxobutanoate-binding positions include 44–45 (DS), D83, and K113. E115 serves as a coordination point for Mg(2+). E183 functions as the Proton acceptor in the catalytic mechanism.

It belongs to the PanB family. Homodecamer; pentamer of dimers. The cofactor is Mg(2+).

It is found in the cytoplasm. The enzyme catalyses 3-methyl-2-oxobutanoate + (6R)-5,10-methylene-5,6,7,8-tetrahydrofolate + H2O = 2-dehydropantoate + (6S)-5,6,7,8-tetrahydrofolate. Its pathway is cofactor biosynthesis; (R)-pantothenate biosynthesis; (R)-pantoate from 3-methyl-2-oxobutanoate: step 1/2. Its function is as follows. Catalyzes the reversible reaction in which hydroxymethyl group from 5,10-methylenetetrahydrofolate is transferred onto alpha-ketoisovalerate to form ketopantoate. The chain is 3-methyl-2-oxobutanoate hydroxymethyltransferase from Leptospira borgpetersenii serovar Hardjo-bovis (strain L550).